The following is a 281-amino-acid chain: Pantothenate synthetase (281 aa).

Residue 30-37 participates in ATP binding; it reads MGALHHGH. The active-site Proton donor is the His37. (R)-pantoate is bound at residue Gln61. Residue Gln61 coordinates beta-alanine. 147–150 provides a ligand contact to ATP; sequence GEKD. (R)-pantoate is bound at residue Gln153. ATP contacts are provided by residues Leu176 and 184–187; that span reads SSSR.

It belongs to the pantothenate synthetase family. As to quaternary structure, homodimer.

It localises to the cytoplasm. The enzyme catalyses (R)-pantoate + beta-alanine + ATP = (R)-pantothenate + AMP + diphosphate + H(+). The protein operates within cofactor biosynthesis; (R)-pantothenate biosynthesis; (R)-pantothenate from (R)-pantoate and beta-alanine: step 1/1. Its function is as follows. Catalyzes the condensation of pantoate with beta-alanine in an ATP-dependent reaction via a pantoyl-adenylate intermediate. The sequence is that of Pantothenate synthetase from Bartonella bacilliformis (strain ATCC 35685 / KC583 / Herrer 020/F12,63).